Reading from the N-terminus, the 168-residue chain is Phosphopantetheine adenylyltransferase (168 aa).

Ser8 contributes to the substrate binding site. Residues 8 to 9 (SF) and His16 contribute to the ATP site. Substrate is bound by residues Lys40, Ala72, and Arg86. Residues 87 to 89 (GLR), Glu97, and 122 to 128 (YSFLSSS) contribute to the ATP site.

The protein belongs to the bacterial CoaD family. In terms of assembly, homohexamer. Mg(2+) serves as cofactor.

It is found in the cytoplasm. It carries out the reaction (R)-4'-phosphopantetheine + ATP + H(+) = 3'-dephospho-CoA + diphosphate. Its pathway is cofactor biosynthesis; coenzyme A biosynthesis; CoA from (R)-pantothenate: step 4/5. Its function is as follows. Reversibly transfers an adenylyl group from ATP to 4'-phosphopantetheine, yielding dephospho-CoA (dPCoA) and pyrophosphate. This chain is Phosphopantetheine adenylyltransferase, found in Trichodesmium erythraeum (strain IMS101).